A 610-amino-acid chain; its full sequence is Protein Smaug homolog 1 (610 aa).

S67 carries the post-translational modification Phosphoserine. Disordered stretches follow at residues 177–222, 318–366, and 464–487; these read ARGP…EEGS, SSPS…LQPP, and NRGF…GRRN. The 74-residue stretch at 222–295 folds into the SAM domain; sequence SGMKDVPAWL…LKSLERDIIE (74 aa). S319 bears the Phosphoserine mark. The residue at position 323 (T323) is a Phosphothreonine. Positions 344 to 358 are enriched in low complexity; the sequence is SAATVTSATASASAG. At R465 the chain carries Omega-N-methylarginine. Over residues 467–480 the composition is skewed to polar residues; that stretch reads FGQSNSLPTASSVG. The residue at position 472 (S472) is a Phosphoserine.

The protein belongs to the SMAUG family. As to expression, expressed in brain (at protein level).

The protein localises to the cytoplasm. Its subcellular location is the cell projection. It localises to the dendrite. The protein resides in the synapse. It is found in the synaptosome. Acts as a translational repressor of SRE-containing messengers. The protein is Protein Smaug homolog 1 (Samd4a) of Rattus norvegicus (Rat).